The following is a 294-amino-acid chain: Ribosomal RNA small subunit methyltransferase A (294 aa).

The S-adenosyl-L-methionine site is built by N29, V31, G56, E77, D107, and N126.

This sequence belongs to the class I-like SAM-binding methyltransferase superfamily. rRNA adenine N(6)-methyltransferase family. RsmA subfamily.

Its subcellular location is the cytoplasm. It catalyses the reaction adenosine(1518)/adenosine(1519) in 16S rRNA + 4 S-adenosyl-L-methionine = N(6)-dimethyladenosine(1518)/N(6)-dimethyladenosine(1519) in 16S rRNA + 4 S-adenosyl-L-homocysteine + 4 H(+). Functionally, specifically dimethylates two adjacent adenosines (A1518 and A1519) in the loop of a conserved hairpin near the 3'-end of 16S rRNA in the 30S particle. May play a critical role in biogenesis of 30S subunits. This is Ribosomal RNA small subunit methyltransferase A from Mycobacterium sp. (strain MCS).